The chain runs to 101 residues: Putative regulatory protein PrgT (101 aa).

Its function is as follows. Might be involved in the expression of prgA, but is not required for activation of the expression of prgB. This Enterococcus faecalis (strain ATCC 47077 / OG1RF) protein is Putative regulatory protein PrgT (prgT).